A 248-amino-acid chain; its full sequence is Probable transcriptional regulatory protein RPD_4171 (248 aa).

The disordered stretch occupies residues 1–22 (MAGHSQFKNIMHRKGKQDAQRS).

The protein belongs to the TACO1 family.

It is found in the cytoplasm. This chain is Probable transcriptional regulatory protein RPD_4171, found in Rhodopseudomonas palustris (strain BisB5).